Reading from the N-terminus, the 313-residue chain is Postacrosomal sheath WW domain-binding protein (313 aa).

The GRAM domain occupies 8–87 (TESRRGALIP…GLMSDCTIEQ (80 aa)). 12 tandem repeats follow at residues 179–185 (YGPPPPG), 193–199 (YGTPPEG), 207–213 (YGAPPMG), 214–220 (YGAPPVG), 221–227 (YGVPPGG), 228–234 (YGVPPGG), 235–241 (YGVPPGG), 242–248 (YGAPPGG), 249–255 (YGVPPGG), 256–262 (YGAPPGG), 263–269 (YGAPPAG), and 270–276 (YGAPPAG). The tract at residues 179–276 (YGPPPPGYTV…PAGYGAPPAG (98 aa)) is 12 X 7 AA tandem repeat of Y-G-X-P-P-X-G. The PPxY motif 1 signature appears at 183–186 (PPGY). Positions 254-264 (GGYGAPPGGYG) are enriched in gly residues. The segment at 254-313 (GGYGAPPGGYGAPPAGYGAPPAGNEALPPAYEAPSAGNTAASHRSMTAQQETSLPTTSSS) is disordered. Positions 265–276 (APPAGYGAPPAG) are enriched in low complexity. The PPxY motif 2 signature appears at 281-284 (PPAY). Over residues 289–313 (AGNTAASHRSMTAQQETSLPTTSSS) the composition is skewed to polar residues.

As to expression, expressed in testis.

Functionally, may play a role in meiotic resumption and pronuclear formation, mediated by a WW domain-signaling pathway during fertilization. This Bos taurus (Bovine) protein is Postacrosomal sheath WW domain-binding protein (WBP2NL).